A 484-amino-acid chain; its full sequence is Aldehyde dehydrogenase family 3 member F1 (484 aa).

192–197 (GSPKIG) is a binding site for NAD(+). The active-site Proton acceptor is the E214. Catalysis depends on C252, which acts as the Nucleophile.

It belongs to the aldehyde dehydrogenase family. Homotetramer. Constituively expressed at low levels.

It catalyses the reaction an aldehyde + NAD(+) + H2O = a carboxylate + NADH + 2 H(+). The sequence is that of Aldehyde dehydrogenase family 3 member F1 (ALDH3F1) from Arabidopsis thaliana (Mouse-ear cress).